We begin with the raw amino-acid sequence, 123 residues long: Small ribosomal subunit protein uS12 (123 aa).

The tract at residues 1–25 is disordered; the sequence is MPTINQLVRKPRKSRSALNKAPALQ. Asp90 bears the 3-methylthioaspartic acid mark.

Belongs to the universal ribosomal protein uS12 family. In terms of assembly, part of the 30S ribosomal subunit. Contacts proteins S8 and S17. May interact with IF1 in the 30S initiation complex.

Its function is as follows. With S4 and S5 plays an important role in translational accuracy. Interacts with and stabilizes bases of the 16S rRNA that are involved in tRNA selection in the A site and with the mRNA backbone. Located at the interface of the 30S and 50S subunits, it traverses the body of the 30S subunit contacting proteins on the other side and probably holding the rRNA structure together. The combined cluster of proteins S8, S12 and S17 appears to hold together the shoulder and platform of the 30S subunit. The chain is Small ribosomal subunit protein uS12 from Ehrlichia canis (strain Jake).